The sequence spans 309 residues: Polyprenal reductase (309 aa).

Residues 1–3 (MFH) lie on the Cytoplasmic side of the membrane. A helical membrane pass occupies residues 4-24 (ILSIVNIIWLLLALCFGAAFC). The Lumenal portion of the chain corresponds to 25 to 67 (LNKFSVKLPNRVEHVFQDFIRYGKTKENIKRASWQLVFDLSKR). The chain crosses the membrane as a helical span at residues 68–88 (YFYHFYVVSVMWNGLLLLFSI). Over 89-114 (RSVVMSEAFPDWIIDVLGSLTGRSRG) the chain is Cytoplasmic. The chain crosses the membrane as a helical span at residues 115–135 (AWNEIHLSTLLLQVLLWVHTL). Residues 136 to 150 (RRLLECLFVSVFSDG) lie on the Lumenal side of the membrane. The helical transmembrane segment at 151 to 171 (VINVVQYAFGLSYYIILGLTV) threads the bilayer. Topologically, residues 172-185 (LCTNDSLPQSESVS) are cytoplasmic. A helical transmembrane segment spans residues 186–206 (FFNQLTWYHVVGTLLFFWASF). Topologically, residues 207-255 (LQHQSLSLLAKMRTDSSGKVETLAHKMPCGGWFELVSCPHYLAELLIYA) are lumenal. Residues 256-276 (AMCVCCGCASLTWWMVVLYVL) form a helical membrane-spanning segment. At 277–309 (CNQALAAQLCHEYYRSKFKTYPHHRKAFIPFVL) the chain is on the cytoplasmic side.

Belongs to the steroid 5-alpha reductase family. Polyprenal reductase subfamily.

Its subcellular location is the endoplasmic reticulum membrane. The enzyme catalyses a di-trans,poly-cis-dolichal + NADP(+) = a di-trans,poly-cis-polyprenal + NADPH + H(+). It carries out the reaction a 3-oxo-5alpha-steroid + NADP(+) = a 3-oxo-Delta(4)-steroid + NADPH + H(+). The catalysed reaction is androst-4-ene-3,17-dione + NADPH + H(+) = 5alpha-androstan-3,17-dione + NADP(+). It catalyses the reaction 17beta-hydroxy-5alpha-androstan-3-one + NADP(+) = testosterone + NADPH + H(+). It functions in the pathway protein modification; protein glycosylation. In terms of biological role, plays a key role in early steps of protein N-linked glycosylation by being involved in the conversion of polyprenol into dolichol. Acts as a polyprenal reductase that mediates the reduction of polyprenal into dolichal in a NADP-dependent mechanism. Dolichols are required for the synthesis of dolichol-linked monosaccharides and the oligosaccharide precursor used for N-glycosylation. Also able to convert testosterone (T) into 5-alpha-dihydrotestosterone (DHT). The sequence is that of Polyprenal reductase (srd5a3) from Danio rerio (Zebrafish).